We begin with the raw amino-acid sequence, 422 residues long: Dihydroorotase (422 aa).

Zn(2+) contacts are provided by histidine 61 and histidine 63. Substrate-binding positions include 63–65 (HLR) and asparagine 95. A Zn(2+)-binding site is contributed by aspartate 153. Asparagine 278 serves as a coordination point for substrate. Aspartate 305 provides a ligand contact to Zn(2+). Aspartate 305 is a catalytic residue. Residues histidine 309 and 322-323 (PG) each bind substrate.

The protein belongs to the metallo-dependent hydrolases superfamily. DHOase family. Class I DHOase subfamily. In terms of assembly, monomer. Forms a 1:1 stoichiometric complex with PyrB. The complex exists as an equilibrium mixture of heterohexamers, composed of 3 PyrC and 3 PyrB subunits, and dodecamers. The complex has both DHOase and ATCase activities. It depends on Zn(2+) as a cofactor.

The catalysed reaction is (S)-dihydroorotate + H2O = N-carbamoyl-L-aspartate + H(+). It participates in pyrimidine metabolism; UMP biosynthesis via de novo pathway; (S)-dihydroorotate from bicarbonate: step 3/3. With respect to regulation, the monomer has very low activity by itself. Activated several thousandfold by formation of a complex with PyrB aspartate carbamoyltransferase (ATCase). Functionally, catalyzes the reversible cyclization of carbamoyl aspartate to dihydroorotate. This Aquifex aeolicus (strain VF5) protein is Dihydroorotase.